A 301-amino-acid chain; its full sequence is Homoserine kinase (301 aa).

Residue Pro-86–Thr-96 coordinates ATP.

This sequence belongs to the GHMP kinase family. Homoserine kinase subfamily.

It localises to the cytoplasm. The enzyme catalyses L-homoserine + ATP = O-phospho-L-homoserine + ADP + H(+). It participates in amino-acid biosynthesis; L-threonine biosynthesis; L-threonine from L-aspartate: step 4/5. Catalyzes the ATP-dependent phosphorylation of L-homoserine to L-homoserine phosphate. This Thermosynechococcus vestitus (strain NIES-2133 / IAM M-273 / BP-1) protein is Homoserine kinase.